Here is a 130-residue protein sequence, read N- to C-terminus: Small ribosomal subunit protein uS8 (130 aa).

The protein belongs to the universal ribosomal protein uS8 family. In terms of assembly, part of the 30S ribosomal subunit. Contacts proteins S5 and S12.

Functionally, one of the primary rRNA binding proteins, it binds directly to 16S rRNA central domain where it helps coordinate assembly of the platform of the 30S subunit. The polypeptide is Small ribosomal subunit protein uS8 (Buchnera aphidicola subsp. Acyrthosiphon pisum (strain 5A)).